We begin with the raw amino-acid sequence, 153 residues long: Superoxide dismutase [Cu-Zn] (153 aa).

Cu cation contacts are provided by histidine 45 and histidine 47. The residue at position 53 (threonine 53) is a Phosphothreonine. A disulfide bridge links cysteine 56 with cysteine 145. Residue serine 59 is modified to Phosphoserine. Residue histidine 62 participates in Cu cation binding. The Zn(2+) site is built by histidine 62, histidine 70, histidine 79, and aspartate 82. Residue histidine 119 participates in Cu cation binding.

It belongs to the Cu-Zn superoxide dismutase family. Homodimer. Cu cation is required as a cofactor. It depends on Zn(2+) as a cofactor.

It localises to the cytoplasm. The catalysed reaction is 2 superoxide + 2 H(+) = H2O2 + O2. In terms of biological role, destroys radicals which are normally produced within the cells and which are toxic to biological systems. The chain is Superoxide dismutase [Cu-Zn] from Drosophila melanogaster (Fruit fly).